The primary structure comprises 444 residues: uncharacterized protein (444 aa).

The transit peptide at 1–72 directs the protein to the chloroplast; it reads MGFLTAAIRV…RPMWNVSFLR (72 aa). A disordered region spans residues 77–107; that stretch reads HSTPARETGDDDISKSENSSSQDGDSCTKLK. Positions 92–101 are enriched in polar residues; the sequence is SENSSSQDGD. One can recognise a CRM domain in the interval 175-272; that stretch reads EILTPEEHFY…KNYVQPPTEI (98 aa). Residues 292–355 adopt a coiled-coil conformation; that stretch reads DALRAVRKYI…CLEDEQEEDE (64 aa). 2 disordered regions span residues 344–364 and 392–426; these read EECL…ATDS and KFPA…PNFD. Positions 346–357 are enriched in acidic residues; that stretch reads CLEDEQEEDEAG. Over residues 406 to 426 the composition is skewed to basic and acidic residues; sequence DLGKAKSEGEENDDDKSPNFD.

The protein resides in the plastid. The protein localises to the chloroplast. This is an uncharacterized protein from Arabidopsis thaliana (Mouse-ear cress).